A 463-amino-acid polypeptide reads, in one-letter code: V-type proton ATPase subunit S1 (463 aa).

The signal sequence occupies residues 1–32 (MMAATVVSRIRTGTGRAPVMWLSLSLVAVAAA). A propeptide spanning residues 33–225 (VATEQQVPLV…TAVRPSRVAR (193 aa)) is cleaved from the precursor. Topologically, residues 33–412 (VATEQQVPLV…EQFSYASDCA (380 aa)) are lumenal. 8 N-linked (GlcNAc...) asparagine glycosylation sites follow: asparagine 164, asparagine 255, asparagine 267, asparagine 290, asparagine 297, asparagine 344, asparagine 351, and asparagine 399. Residues cysteine 365 and cysteine 411 are joined by a disulfide bond. A helical membrane pass occupies residues 413–433 (GFFSPGIWMGLLTTLFMLFIF). Topologically, residues 434-463 (TYGLHMILSLKTMDRFDDHKGPTITLTQIV) are cytoplasmic.

It belongs to the vacuolar ATPase subunit S1 family. As to quaternary structure, accessory component of the multisubunit proton-transporting vacuolar (V)-ATPase protein pump. Interacts (via N-terminus) with ATP6AP2 (via N-terminus). Interacts with RNASEK. Interacts with TMEM106B (via C-terminus). Post-translationally, N-glycosylated. In terms of tissue distribution, expressed in brain cortex (at protein level). Highly expressed in islets of Langerhans. Expressed in pancreatic acini, pituitary gland, adrenal gland, lung, brain and bone marrow.

It is found in the endoplasmic reticulum membrane. It localises to the endoplasmic reticulum-Golgi intermediate compartment membrane. Its subcellular location is the cytoplasmic vesicle. The protein resides in the secretory vesicle. The protein localises to the synaptic vesicle membrane. It is found in the clathrin-coated vesicle membrane. Accessory subunit of the proton-transporting vacuolar (V)-ATPase protein pump, which is required for luminal acidification of secretory vesicles. Guides the V-type ATPase into specialized subcellular compartments, such as neuroendocrine regulated secretory vesicles or the ruffled border of the osteoclast, thereby regulating its activity. Involved in membrane trafficking and Ca(2+)-dependent membrane fusion. May play a role in the assembly of the V-type ATPase complex. In aerobic conditions, involved in intracellular iron homeostasis, thus triggering the activity of Fe(2+) prolyl hydroxylase (PHD) enzymes, and leading to HIF1A hydroxylation and subsequent proteasomal degradation. In islets of Langerhans cells, may regulate the acidification of dense-core secretory granules. The chain is V-type proton ATPase subunit S1 (Atp6ap1) from Mus musculus (Mouse).